A 481-amino-acid polypeptide reads, in one-letter code: Adenosylhomocysteinase (481 aa).

Residues Thr-65, Asp-140, and Glu-200 each coordinate substrate. 201 to 203 (TTT) contacts NAD(+). The substrate site is built by Lys-230 and Asp-234. Residues Asn-235, 264-269 (GYGDVG), Glu-287, Asn-322, 343-345 (IGH), and Asn-393 each bind NAD(+).

Belongs to the adenosylhomocysteinase family. The cofactor is NAD(+).

Its subcellular location is the cytoplasm. It catalyses the reaction S-adenosyl-L-homocysteine + H2O = L-homocysteine + adenosine. It functions in the pathway amino-acid biosynthesis; L-homocysteine biosynthesis; L-homocysteine from S-adenosyl-L-homocysteine: step 1/1. Functionally, may play a key role in the regulation of the intracellular concentration of adenosylhomocysteine. The chain is Adenosylhomocysteinase from Polynucleobacter necessarius subsp. necessarius (strain STIR1).